Reading from the N-terminus, the 302-residue chain is Phosphoribosylaminoimidazole-succinocarboxamide synthase (302 aa).

Belongs to the SAICAR synthetase family.

The enzyme catalyses 5-amino-1-(5-phospho-D-ribosyl)imidazole-4-carboxylate + L-aspartate + ATP = (2S)-2-[5-amino-1-(5-phospho-beta-D-ribosyl)imidazole-4-carboxamido]succinate + ADP + phosphate + 2 H(+). It functions in the pathway purine metabolism; IMP biosynthesis via de novo pathway; 5-amino-1-(5-phospho-D-ribosyl)imidazole-4-carboxamide from 5-amino-1-(5-phospho-D-ribosyl)imidazole-4-carboxylate: step 1/2. In Cupriavidus metallidurans (strain ATCC 43123 / DSM 2839 / NBRC 102507 / CH34) (Ralstonia metallidurans), this protein is Phosphoribosylaminoimidazole-succinocarboxamide synthase.